The sequence spans 284 residues: Bifunctional protein FolD (284 aa).

NADP(+) contacts are provided by residues 165 to 167 (GRS), Ser190, and Ile231.

This sequence belongs to the tetrahydrofolate dehydrogenase/cyclohydrolase family. Homodimer.

It catalyses the reaction (6R)-5,10-methylene-5,6,7,8-tetrahydrofolate + NADP(+) = (6R)-5,10-methenyltetrahydrofolate + NADPH. It carries out the reaction (6R)-5,10-methenyltetrahydrofolate + H2O = (6R)-10-formyltetrahydrofolate + H(+). The protein operates within one-carbon metabolism; tetrahydrofolate interconversion. In terms of biological role, catalyzes the oxidation of 5,10-methylenetetrahydrofolate to 5,10-methenyltetrahydrofolate and then the hydrolysis of 5,10-methenyltetrahydrofolate to 10-formyltetrahydrofolate. This chain is Bifunctional protein FolD, found in Lysinibacillus sphaericus (strain C3-41).